The following is a 431-amino-acid chain: Argininosuccinate lyase (431 aa).

It belongs to the lyase 1 family. Argininosuccinate lyase subfamily.

The protein resides in the cytoplasm. It catalyses the reaction 2-(N(omega)-L-arginino)succinate = fumarate + L-arginine. The protein operates within amino-acid biosynthesis; L-arginine biosynthesis; L-arginine from L-ornithine and carbamoyl phosphate: step 3/3. The polypeptide is Argininosuccinate lyase (Xanthomonas campestris pv. campestris (strain B100)).